The following is a 404-amino-acid chain: Phosphoglycerate kinase (404 aa).

Substrate-binding positions include 22 to 24 (DLN), arginine 37, 60 to 63 (HLGR), arginine 119, and arginine 156. ATP is bound by residues lysine 206, glycine 302, glutamate 333, and 359–362 (GGDS).

It belongs to the phosphoglycerate kinase family. As to quaternary structure, monomer.

It localises to the cytoplasm. The catalysed reaction is (2R)-3-phosphoglycerate + ATP = (2R)-3-phospho-glyceroyl phosphate + ADP. It participates in carbohydrate degradation; glycolysis; pyruvate from D-glyceraldehyde 3-phosphate: step 2/5. The sequence is that of Phosphoglycerate kinase from Clavibacter sepedonicus (Clavibacter michiganensis subsp. sepedonicus).